A 314-amino-acid chain; its full sequence is PDZ domain-containing protein GIPC2 (314 aa).

Positions 1-12 (MPLGLRGKKKAA) are enriched in basic residues. The disordered stretch occupies residues 1–36 (MPLGLRGKKKAAKSKETARLVEGERSGGSQGVPGPP). A compositionally biased stretch (basic and acidic residues) spans 13 to 25 (KSKETARLVEGER). Positions 117-197 (EVNVYKSEDS…EELFTLQLIE (81 aa)) constitute a PDZ domain.

It belongs to the GIPC family. In terms of assembly, probably interacts with SEMA5A.

The protein resides in the cytoplasm. The polypeptide is PDZ domain-containing protein GIPC2 (Gipc2) (Rattus norvegicus (Rat)).